The sequence spans 477 residues: Glycogen synthase (477 aa).

Residue Lys15 coordinates ADP-alpha-D-glucose.

This sequence belongs to the glycosyltransferase 1 family. Bacterial/plant glycogen synthase subfamily.

It carries out the reaction [(1-&gt;4)-alpha-D-glucosyl](n) + ADP-alpha-D-glucose = [(1-&gt;4)-alpha-D-glucosyl](n+1) + ADP + H(+). Its pathway is glycan biosynthesis; glycogen biosynthesis. In terms of biological role, synthesizes alpha-1,4-glucan chains using ADP-glucose. This chain is Glycogen synthase, found in Streptococcus pneumoniae serotype 19F (strain G54).